Consider the following 744-residue polypeptide: Translation initiation factor IF-2, chloroplastic (744 aa).

The tract at residues 113-146 (NSEGSFKSGKQKKKEKGKHKQNVNKDIHHTKNNR) is disordered. Residues 121-134 (GKQKKKEKGKHKQN) show a composition bias toward basic residues. In terms of domain architecture, tr-type G spans 244–417 (NRAPIVTILG…CSLAEFINLK (174 aa)). Positions 253–260 (GHVDHGKT) are G1. 253-260 (GHVDHGKT) is a GTP binding site. The tract at residues 278 to 282 (GITQS) is G2. The interval 303–306 (DTPG) is G3. GTP contacts are provided by residues 303-307 (DTPGH) and 357-360 (NKID). Positions 357–360 (NKID) are G4. A G5 region spans residues 393-395 (SAL).

This sequence belongs to the TRAFAC class translation factor GTPase superfamily. Classic translation factor GTPase family. IF-2 subfamily.

The protein localises to the plastid. It localises to the chloroplast. Its function is as follows. One of the essential components for the initiation of protein synthesis. Protects formylmethionyl-tRNA from spontaneous hydrolysis and promotes its binding to the 30S ribosomal subunits. Also involved in the hydrolysis of GTP during the formation of the 70S ribosomal complex. In Gracilaria tenuistipitata var. liui (Red alga), this protein is Translation initiation factor IF-2, chloroplastic (infB).